A 208-amino-acid chain; its full sequence is MARYSESVCRLCRRENLKMYLKGDRCYTDKCAIERRPYPPGQHGQGRTKFSEYGVQLREKQKVKRMYGLLEAGFRHAYQNAAAAKGKTGENLLQTLELRLDNVVFRLGFADTRNEARQLVRHGHFKVNGRKVNIPSYLCRPGDKVELKDRSKKVVRITEALEAVDRRGVPAWLDLDKGGFKGTVKTSPAREDITMPIQEQLIVELYSK.

In terms of domain architecture, S4 RNA-binding spans 98-159 (LRLDNVVFRL…RSKKVVRITE (62 aa)).

The protein belongs to the universal ribosomal protein uS4 family. In terms of assembly, part of the 30S ribosomal subunit. Contacts protein S5. The interaction surface between S4 and S5 is involved in control of translational fidelity.

Functionally, one of the primary rRNA binding proteins, it binds directly to 16S rRNA where it nucleates assembly of the body of the 30S subunit. With S5 and S12 plays an important role in translational accuracy. The polypeptide is Small ribosomal subunit protein uS4 (Anaeromyxobacter dehalogenans (strain 2CP-1 / ATCC BAA-258)).